Consider the following 177-residue polypeptide: Large ribosomal subunit protein uL6 (177 aa).

This sequence belongs to the universal ribosomal protein uL6 family. As to quaternary structure, part of the 50S ribosomal subunit.

Its function is as follows. This protein binds to the 23S rRNA, and is important in its secondary structure. It is located near the subunit interface in the base of the L7/L12 stalk, and near the tRNA binding site of the peptidyltransferase center. This chain is Large ribosomal subunit protein uL6, found in Bartonella quintana (strain Toulouse) (Rochalimaea quintana).